The following is a 298-amino-acid chain: Protoheme IX farnesyltransferase (298 aa).

Helical transmembrane passes span 16–36, 45–65, 97–117, 141–161, 172–192, 223–243, 244–264, and 277–297; these read VVAL…PGMP, ALGF…NQLL, VLIV…TAVL, IVIG…AVTG, SLLV…LAIF, VLLA…VFYL, GGAV…LDPP, and VVYL…LPWV.

This sequence belongs to the UbiA prenyltransferase family. Protoheme IX farnesyltransferase subfamily.

It localises to the cell inner membrane. The enzyme catalyses heme b + (2E,6E)-farnesyl diphosphate + H2O = Fe(II)-heme o + diphosphate. It functions in the pathway porphyrin-containing compound metabolism; heme O biosynthesis; heme O from protoheme: step 1/1. In terms of biological role, converts heme B (protoheme IX) to heme O by substitution of the vinyl group on carbon 2 of heme B porphyrin ring with a hydroxyethyl farnesyl side group. The sequence is that of Protoheme IX farnesyltransferase from Xanthomonas campestris pv. campestris (strain 8004).